We begin with the raw amino-acid sequence, 204 residues long: Sec-independent protein translocase protein TatB (204 aa).

The chain crosses the membrane as a helical span at residues 1 to 21; it reads MFDIGFSELLLIFIVGLVVLG. The span at 154–166 shows a compositional bias: polar residues; that stretch reads VVSSVDSIQNGQS. A disordered region spans residues 154 to 204; that stretch reads VVSSVDSIQNGQSDLELDAQAEVDRQLAAMMDKYAPPDDVAENPISTEKTS.

This sequence belongs to the TatB family. In terms of assembly, the Tat system comprises two distinct complexes: a TatABC complex, containing multiple copies of TatA, TatB and TatC subunits, and a separate TatA complex, containing only TatA subunits. Substrates initially bind to the TatABC complex, which probably triggers association of the separate TatA complex to form the active translocon.

It is found in the cell inner membrane. Its function is as follows. Part of the twin-arginine translocation (Tat) system that transports large folded proteins containing a characteristic twin-arginine motif in their signal peptide across membranes. Together with TatC, TatB is part of a receptor directly interacting with Tat signal peptides. TatB may form an oligomeric binding site that transiently accommodates folded Tat precursor proteins before their translocation. This is Sec-independent protein translocase protein TatB from Mannheimia succiniciproducens (strain KCTC 0769BP / MBEL55E).